A 737-amino-acid polypeptide reads, in one-letter code: Serine/threonine-protein kinase dst1 (737 aa).

The Protein kinase domain occupies 29–281 (YHIQERLGKG…AKELLNHEFI (253 aa)). ATP is bound by residues 35-43 (LGKGSFGQV) and Lys58. The Proton acceptor role is filled by Asp149. Disordered regions lie at residues 305-356 (SMFE…SNNY), 372-475 (KDDA…TTDQ), 491-559 (KPIT…ISNN), and 575-631 (NNNI…ESLS). 4 stretches are compositionally biased toward low complexity: residues 334 to 345 (NNNTVTNYSTVI), 401 to 410 (SSCSSSSSSS), 425 to 444 (PITN…NKIP), and 454 to 473 (ATTT…STTT). Residues 491–503 (KPITSSNSTSVTP) show a composition bias toward polar residues. The span at 510-525 (SNNTTTTSNINTPIKP) shows a compositional bias: low complexity. Composition is skewed to polar residues over residues 529-554 (LKKS…TPLK) and 585-596 (SPTTGQKIIKTN). The span at 597-615 (SGGVLKSSGGLSSKRSPSS) shows a compositional bias: low complexity.

Belongs to the protein kinase superfamily. STE Ser/Thr protein kinase family. STE20 subfamily. Mg(2+) serves as cofactor.

It carries out the reaction L-seryl-[protein] + ATP = O-phospho-L-seryl-[protein] + ADP + H(+). The catalysed reaction is L-threonyl-[protein] + ATP = O-phospho-L-threonyl-[protein] + ADP + H(+). This chain is Serine/threonine-protein kinase dst1, found in Dictyostelium discoideum (Social amoeba).